The primary structure comprises 483 residues: Probable cytochrome P450 517A4 (483 aa).

A helical transmembrane segment spans residues 1–21 (MEIVNVLLFLIILFLVKDFVK). Cys-429 is a heme binding site.

The protein belongs to the cytochrome P450 family. Heme serves as cofactor.

The protein resides in the membrane. This Dictyostelium discoideum (Social amoeba) protein is Probable cytochrome P450 517A4 (cyp517A4).